Reading from the N-terminus, the 327-residue chain is rRNA 2'-O-methyltransferase fibrillarin (327 aa).

The tract at residues 1–96 is disordered; sequence MGTDYRNSGR…GFKGGAKTMV (96 aa). Asymmetric dimethylarginine occurs at positions 10, 19, 44, 49, 55, 65, 69, and 78. The span at 22–56 shows a compositional bias: basic and acidic residues; the sequence is GNDRRDSGRSFGDRRPERPDFKRGDGGRGFGDRRG. Residues 73 to 90 are compositionally biased toward gly residues; it reads DGPGGRGGPGGPGGGFKG. S-adenosyl-L-methionine contacts are provided by residues 181–182, 200–201, 225–226, and 245–248; these read TT, EF, DA, and DVAQ.

Belongs to the methyltransferase superfamily. Fibrillarin family. As to quaternary structure, component of box C/D small nucleolar ribonucleoprotein (snoRNP) particles. It is associated with the U3, U8 and U13 small nuclear RNAs. Post-translationally, by homology to other fibrillarins, some or all of the N-terminal domain arginines are modified to asymmetric dimethylarginine (DMA).

It is found in the nucleus. The protein resides in the nucleolus. The enzyme catalyses L-glutaminyl-[histone H2A] + S-adenosyl-L-methionine = N(5)-methyl-L-glutaminyl-[histone H2A] + S-adenosyl-L-homocysteine + H(+). Its function is as follows. S-adenosyl-L-methionine-dependent methyltransferase that has the ability to methylate both RNAs and proteins. Involved in pre-rRNA processing. Utilizes the methyl donor S-adenosyl-L-methionine to catalyze the site-specific 2'-hydroxyl methylation of ribose moieties in pre-ribosomal RNA. Site specificity is provided by a guide RNA that base pairs with the substrate. Methylation occurs at a characteristic distance from the sequence involved in base pairing with the guide RNA. Also acts as a protein methyltransferase by mediating methylation of 'Gln-105' of histone H2A (H2AQ105me), a modification that impairs binding of the FACT complex and is specifically present at 35S ribosomal DNA locus. This is rRNA 2'-O-methyltransferase fibrillarin from Giardia intestinalis (Giardia lamblia).